A 206-amino-acid polypeptide reads, in one-letter code: Large ribosomal subunit protein uL4 (206 aa).

Positions 47–75 are disordered; sequence GTQSAKTRAEVSGGGIKPWRQKGTGRARQ.

Belongs to the universal ribosomal protein uL4 family. In terms of assembly, part of the 50S ribosomal subunit.

In terms of biological role, one of the primary rRNA binding proteins, this protein initially binds near the 5'-end of the 23S rRNA. It is important during the early stages of 50S assembly. It makes multiple contacts with different domains of the 23S rRNA in the assembled 50S subunit and ribosome. Forms part of the polypeptide exit tunnel. The chain is Large ribosomal subunit protein uL4 from Clostridium botulinum (strain ATCC 19397 / Type A).